Reading from the N-terminus, the 491-residue chain is Probable cytosol aminopeptidase (491 aa).

Mn(2+)-binding residues include lysine 264 and aspartate 269. Lysine 276 is a catalytic residue. The Mn(2+) site is built by aspartate 287, aspartate 346, and glutamate 348. Residue arginine 350 is part of the active site.

The protein belongs to the peptidase M17 family. Mn(2+) serves as cofactor.

It is found in the cytoplasm. The enzyme catalyses Release of an N-terminal amino acid, Xaa-|-Yaa-, in which Xaa is preferably Leu, but may be other amino acids including Pro although not Arg or Lys, and Yaa may be Pro. Amino acid amides and methyl esters are also readily hydrolyzed, but rates on arylamides are exceedingly low.. It carries out the reaction Release of an N-terminal amino acid, preferentially leucine, but not glutamic or aspartic acids.. Presumably involved in the processing and regular turnover of intracellular proteins. Catalyzes the removal of unsubstituted N-terminal amino acids from various peptides. This is Probable cytosol aminopeptidase from Xylella fastidiosa (strain 9a5c).